We begin with the raw amino-acid sequence, 382 residues long: tRNA (guanine-N(7)-)-methyltransferase non-catalytic subunit wuho (382 aa).

The tract at residues 40–59 is disordered; sequence VKDTDAGNEPNGNQTQPTPA. Over residues 49 to 59 the composition is skewed to polar residues; that stretch reads PNGNQTQPTPA. 2 WD repeats span residues 149-190 and 192-230; these read GHMS…ECFC and GHTE…ELSK.

Belongs to the WD repeat TRM82 family. Forms a heterodimer with the catalytic subunit.

The protein resides in the nucleus. It participates in tRNA modification; N(7)-methylguanine-tRNA biosynthesis. In terms of biological role, required for the formation of N(7)-methylguanine at position 46 (m7G46) in tRNA. In the complex, it is required to stabilize and induce conformational changes of the catalytic subunit. This Anopheles gambiae (African malaria mosquito) protein is tRNA (guanine-N(7)-)-methyltransferase non-catalytic subunit wuho.